Here is a 269-residue protein sequence, read N- to C-terminus: 4-hydroxy-tetrahydrodipicolinate reductase (269 aa).

NAD(+) contacts are provided by residues 9–14 and glutamate 35; that span reads GAGGRM. Arginine 36 contacts NADP(+). Residues 98 to 100 and 122 to 125 contribute to the NAD(+) site; these read GTT and ASNY. Histidine 155 functions as the Proton donor/acceptor in the catalytic mechanism. A (S)-2,3,4,5-tetrahydrodipicolinate-binding site is contributed by histidine 156. Lysine 159 (proton donor) is an active-site residue. 165–166 provides a ligand contact to (S)-2,3,4,5-tetrahydrodipicolinate; that stretch reads GT.

This sequence belongs to the DapB family.

The protein resides in the cytoplasm. The enzyme catalyses (S)-2,3,4,5-tetrahydrodipicolinate + NAD(+) + H2O = (2S,4S)-4-hydroxy-2,3,4,5-tetrahydrodipicolinate + NADH + H(+). It carries out the reaction (S)-2,3,4,5-tetrahydrodipicolinate + NADP(+) + H2O = (2S,4S)-4-hydroxy-2,3,4,5-tetrahydrodipicolinate + NADPH + H(+). Its pathway is amino-acid biosynthesis; L-lysine biosynthesis via DAP pathway; (S)-tetrahydrodipicolinate from L-aspartate: step 4/4. Its function is as follows. Catalyzes the conversion of 4-hydroxy-tetrahydrodipicolinate (HTPA) to tetrahydrodipicolinate. The polypeptide is 4-hydroxy-tetrahydrodipicolinate reductase (Actinobacillus pleuropneumoniae serotype 7 (strain AP76)).